Reading from the N-terminus, the 376-residue chain is Chaperone protein DnaJ (376 aa).

Positions 5 to 72 (DFYEVLGVPK…QKRAAYDQYG (68 aa)) constitute a J domain. The CR-type zinc-finger motif lies at 136-214 (GKEAQIRIPS…CHGQGRVKKQ (79 aa)). Zn(2+) is bound by residues Cys149, Cys152, Cys166, Cys169, Cys188, Cys191, Cys202, and Cys205. 4 CXXCXGXG motif repeats span residues 149–156 (CETCHGSG), 166–173 (CGTCQGSG), 188–195 (CPHCRGTG), and 202–209 (CTACHGQG). 2 disordered regions span residues 227–246 (DGMRIRSTGNGEPGTNGGPP) and 354–376 (KKGGAKHSPSTESWTDRLKSFFS). Positions 237–246 (GEPGTNGGPP) are enriched in gly residues. Residues 367–376 (WTDRLKSFFS) are compositionally biased toward basic and acidic residues.

This sequence belongs to the DnaJ family. Homodimer. It depends on Zn(2+) as a cofactor.

Its subcellular location is the cytoplasm. Functionally, participates actively in the response to hyperosmotic and heat shock by preventing the aggregation of stress-denatured proteins and by disaggregating proteins, also in an autonomous, DnaK-independent fashion. Unfolded proteins bind initially to DnaJ; upon interaction with the DnaJ-bound protein, DnaK hydrolyzes its bound ATP, resulting in the formation of a stable complex. GrpE releases ADP from DnaK; ATP binding to DnaK triggers the release of the substrate protein, thus completing the reaction cycle. Several rounds of ATP-dependent interactions between DnaJ, DnaK and GrpE are required for fully efficient folding. Also involved, together with DnaK and GrpE, in the DNA replication of plasmids through activation of initiation proteins. The sequence is that of Chaperone protein DnaJ from Acidovorax ebreus (strain TPSY) (Diaphorobacter sp. (strain TPSY)).